The chain runs to 309 residues: Porphobilinogen deaminase (309 aa).

Cys244 is modified (S-(dipyrrolylmethanemethyl)cysteine).

It belongs to the HMBS family. In terms of assembly, monomer. Requires dipyrromethane as cofactor.

It carries out the reaction 4 porphobilinogen + H2O = hydroxymethylbilane + 4 NH4(+). Its pathway is porphyrin-containing compound metabolism; protoporphyrin-IX biosynthesis; coproporphyrinogen-III from 5-aminolevulinate: step 2/4. Its function is as follows. Tetrapolymerization of the monopyrrole PBG into the hydroxymethylbilane pre-uroporphyrinogen in several discrete steps. In Listeria monocytogenes serovar 1/2a (strain ATCC BAA-679 / EGD-e), this protein is Porphobilinogen deaminase.